The primary structure comprises 173 residues: Large ribosomal subunit protein uL10 (173 aa).

The protein belongs to the universal ribosomal protein uL10 family. Part of the ribosomal stalk of the 50S ribosomal subunit. The N-terminus interacts with L11 and the large rRNA to form the base of the stalk. The C-terminus forms an elongated spine to which L12 dimers bind in a sequential fashion forming a multimeric L10(L12)X complex.

Functionally, forms part of the ribosomal stalk, playing a central role in the interaction of the ribosome with GTP-bound translation factors. In Oleidesulfovibrio alaskensis (strain ATCC BAA-1058 / DSM 17464 / G20) (Desulfovibrio alaskensis), this protein is Large ribosomal subunit protein uL10.